A 1232-amino-acid polypeptide reads, in one-letter code: Histone-lysine N-methyltransferase MECOM (1232 aa).

The disordered stretch occupies residues P22–A68. The segment covering P25–A34 has biased composition (acidic residues). The SET domain occupies D80–K192. Residues K101 and K192 each participate in a glycyl lysine isopeptide (Lys-Gly) (interchain with G-Cter in SUMO2) cross-link. The tract at residues M191–G442 is interaction with SUV39H1 and probably MAPK9 and SMAD3. 5 consecutive C2H2-type zinc fingers follow at residues H211 to H238, Q265 to H287, Y293 to H315, Y321 to H344, and H350 to H372. Residue K294 forms a Glycyl lysine isopeptide (Lys-Gly) (interchain with G-Cter in SUMO2) linkage. Residues K369 and K376 each participate in a glycyl lysine isopeptide (Lys-Gly) (interchain with G-Cter in SUMO2) cross-link. The C2H2-type 6 zinc finger occupies F378–H400. A C2H2-type 7; atypical zinc finger spans residues I407–C429. Residues K432, K525, K545, K549, and K557 each participate in a glycyl lysine isopeptide (Lys-Gly) (interchain with G-Cter in SUMO2) cross-link. The tract at residues S548–K622 is disordered. Positions L562–D577 are enriched in basic and acidic residues. Positions S588–G600 are enriched in polar residues. A compositionally biased stretch (basic and acidic residues) spans E608–K622. A Nuclear localization signal motif is present at residues K611–K624. Residue K624 forms a Glycyl lysine isopeptide (Lys-Gly) (interchain with G-Cter in SUMO2) linkage. S626 bears the Phosphoserine mark. Glycyl lysine isopeptide (Lys-Gly) (interchain with G-Cter in SUMO2) cross-links involve residues K637, K665, K687, and K723. The interval L720–T823 is disordered. S728 is subject to Phosphoserine. Residues K733, K734, and K737 each participate in a glycyl lysine isopeptide (Lys-Gly) (interchain with G-Cter in SUMO2) cross-link. S742 carries the phosphoserine modification. Residues P743–T747 carry the CTBP-binding motif 1 motif. Residues K751, K754, and K762 each participate in a glycyl lysine isopeptide (Lys-Gly) (interchain with G-Cter in SUMO2) cross-link. Residues S758–Q773 are compositionally biased toward polar residues. Positions P774–S778 match the CTBP-binding motif 2 motif. Residues K789, K802, and K803 each participate in a glycyl lysine isopeptide (Lys-Gly) (interchain with G-Cter in SUMO2) cross-link. A compositionally biased stretch (basic and acidic residues) spans T791 to S805. Polar residues predominate over residues N806 to S816. Residues K837, K846, K848, and K879 each participate in a glycyl lysine isopeptide (Lys-Gly) (interchain with G-Cter in SUMO2) cross-link. 3 C2H2-type zinc fingers span residues Y914–H936, Y942–H965, and F971–H993. Residue K1020 forms a Glycyl lysine isopeptide (Lys-Gly) (interchain with G-Cter in SUMO2) linkage. The span at I1032 to R1043 shows a compositional bias: polar residues. Residues I1032–P1107 are disordered. S1039 and S1041 each carry phosphoserine. Positions N1044–A1059 are enriched in basic and acidic residues. Glycyl lysine isopeptide (Lys-Gly) (interchain with G-Cter in SUMO2) cross-links involve residues K1055 and K1058. Over residues L1068 to D1088 the composition is skewed to acidic residues. A compositionally biased stretch (basic and acidic residues) spans I1089–E1104. Residues K1122, K1129, K1134, K1151, K1178, and K1186 each participate in a glycyl lysine isopeptide (Lys-Gly) (interchain with G-Cter in SUMO2) cross-link.

Homooligomer. Interacts with CTBP1. Interacts with SMAD3 (via MH2 domain); the interaction is direct. Interacts with SMAD4; through interaction with SMAD3. Interacts with CREBBP, KAT2B and histone deacetylases. Interacts with MAPK8 and MAPK9; inhibits JNK signaling. Interacts with SUV39H1 (via SET domain); enhances MECOM transcriptional repression activity. In terms of processing, may be acetylated by CREBBP and KAT2B.

Its subcellular location is the nucleus. It localises to the nucleus speckle. It is found in the cytoplasm. It catalyses the reaction L-lysyl(9)-[histone H3] + S-adenosyl-L-methionine = N(6)-methyl-L-lysyl(9)-[histone H3] + S-adenosyl-L-homocysteine + H(+). Functionally, functions as a transcriptional regulator binding to DNA sequences in the promoter region of target genes and regulating positively or negatively their expression. Oncogene which plays a role in development, cell proliferation and differentiation. May also play a role in apoptosis through regulation of the JNK and TGF-beta signaling. Involved in hematopoiesis. In terms of biological role, displays histone methyltransferase activity and monomethylates 'Lys-9' of histone H3 (H3K9me1) in vitro. Probably catalyzes the monomethylation of free histone H3 in the cytoplasm which is then transported to the nucleus and incorporated into nucleosomes where SUV39H methyltransferases use it as a substrate to catalyze histone H3 'Lys-9' trimethylation. Likely to be one of the primary histone methyltransferases along with PRDM16 that direct cytoplasmic H3K9me1 methylation. This is Histone-lysine N-methyltransferase MECOM from Mus musculus (Mouse).